The following is a 500-amino-acid chain: Catalase (500 aa).

Catalysis depends on residues His-59 and Asn-131. Heme is bound at residue Tyr-339.

This sequence belongs to the catalase family. It depends on heme as a cofactor.

The enzyme catalyses 2 H2O2 = O2 + 2 H2O. Decomposes hydrogen peroxide into water and oxygen; serves to protect cells from the toxic effects of hydrogen peroxide. The protein is Catalase (katA) of Neisseria gonorrhoeae.